The primary structure comprises 416 residues: NADH-quinone oxidoreductase subunit D (416 aa).

Belongs to the complex I 49 kDa subunit family. In terms of assembly, NDH-1 is composed of 14 different subunits. Subunits NuoB, C, D, E, F, and G constitute the peripheral sector of the complex.

The protein resides in the cell inner membrane. It carries out the reaction a quinone + NADH + 5 H(+)(in) = a quinol + NAD(+) + 4 H(+)(out). NDH-1 shuttles electrons from NADH, via FMN and iron-sulfur (Fe-S) centers, to quinones in the respiratory chain. The immediate electron acceptor for the enzyme in this species is believed to be ubiquinone. Couples the redox reaction to proton translocation (for every two electrons transferred, four hydrogen ions are translocated across the cytoplasmic membrane), and thus conserves the redox energy in a proton gradient. The chain is NADH-quinone oxidoreductase subunit D from Rhodopseudomonas palustris (strain BisB5).